We begin with the raw amino-acid sequence, 136 residues long: Large ribosomal subunit protein uL16c (136 aa).

Belongs to the universal ribosomal protein uL16 family. As to quaternary structure, part of the 50S ribosomal subunit.

Its subcellular location is the plastid. The protein resides in the chloroplast. The chain is Large ribosomal subunit protein uL16c from Saccharum hybrid (Sugarcane).